Consider the following 268-residue polypeptide: Formamidopyrimidine-DNA glycosylase (268 aa).

Residue proline 2 is the Schiff-base intermediate with DNA of the active site. Glutamate 3 acts as the Proton donor in catalysis. Lysine 56 functions as the Proton donor; for beta-elimination activity in the catalytic mechanism. DNA is bound by residues histidine 91, arginine 110, and arginine 149. Residues 234–268 (QVYGRFNQACPNCGQPLKRSRIGGRSSHYCEKCQQ) form an FPG-type zinc finger. The active-site Proton donor; for delta-elimination activity is the arginine 258.

This sequence belongs to the FPG family. As to quaternary structure, monomer. Zn(2+) is required as a cofactor.

The enzyme catalyses Hydrolysis of DNA containing ring-opened 7-methylguanine residues, releasing 2,6-diamino-4-hydroxy-5-(N-methyl)formamidopyrimidine.. The catalysed reaction is 2'-deoxyribonucleotide-(2'-deoxyribose 5'-phosphate)-2'-deoxyribonucleotide-DNA = a 3'-end 2'-deoxyribonucleotide-(2,3-dehydro-2,3-deoxyribose 5'-phosphate)-DNA + a 5'-end 5'-phospho-2'-deoxyribonucleoside-DNA + H(+). Involved in base excision repair of DNA damaged by oxidation or by mutagenic agents. Acts as a DNA glycosylase that recognizes and removes damaged bases. Has a preference for oxidized purines, such as 7,8-dihydro-8-oxoguanine (8-oxoG). Has AP (apurinic/apyrimidinic) lyase activity and introduces nicks in the DNA strand. Cleaves the DNA backbone by beta-delta elimination to generate a single-strand break at the site of the removed base with both 3'- and 5'-phosphates. This Syntrophomonas wolfei subsp. wolfei (strain DSM 2245B / Goettingen) protein is Formamidopyrimidine-DNA glycosylase.